Reading from the N-terminus, the 485-residue chain is Glutamyl-tRNA(Gln) amidotransferase subunit A (485 aa).

Residues lysine 79 and serine 154 each act as charge relay system in the active site. The active-site Acyl-ester intermediate is the serine 178.

Belongs to the amidase family. GatA subfamily. As to quaternary structure, heterotrimer of A, B and C subunits.

The enzyme catalyses L-glutamyl-tRNA(Gln) + L-glutamine + ATP + H2O = L-glutaminyl-tRNA(Gln) + L-glutamate + ADP + phosphate + H(+). Its function is as follows. Allows the formation of correctly charged Gln-tRNA(Gln) through the transamidation of misacylated Glu-tRNA(Gln) in organisms which lack glutaminyl-tRNA synthetase. The reaction takes place in the presence of glutamine and ATP through an activated gamma-phospho-Glu-tRNA(Gln). The sequence is that of Glutamyl-tRNA(Gln) amidotransferase subunit A from Sulfurihydrogenibium sp. (strain YO3AOP1).